The chain runs to 108 residues: FK506-binding protein 1 (108 aa).

The PPIase FKBP-type domain occupies 20–108 (GDAVTIHYVG…VFDVELLGIN (89 aa)).

Belongs to the FKBP-type PPIase family. FKBP1 subfamily.

It is found in the cytoplasm. The enzyme catalyses [protein]-peptidylproline (omega=180) = [protein]-peptidylproline (omega=0). Its activity is regulated as follows. Inhibited by both FK506 and rapamycin. Its function is as follows. PPIases accelerate the folding of proteins. It catalyzes the cis-trans isomerization of proline imidic peptide bonds in oligopeptides. In Yarrowia lipolytica (strain CLIB 122 / E 150) (Yeast), this protein is FK506-binding protein 1 (FPR1).